Here is a 723-residue protein sequence, read N- to C-terminus: METAMCVCSPCCTWQRCCPRLFSCLCCKFIFTSERNCTCFPCPYKDERNCQFCHCTCAENPNCHWCCCSWANDPNCKCCCTASTNLKCYYYESHCCRNVTITFRKGRLRSIVTSSKTALRVGSSDTQMDEPKTMPASSHLVSHLTCPMCNRLRLHSFMLPCNHSLCEKCLRQLQKHAEVTENFFILICPMCSRSHCMPYSHQMHLPENYLRGRLTKRYMQQHGYLKWRFDRSSGPILCQVCRTRRIAYKRCVTCRLNLCNDCLKAFHSDVAMQDHVFVDTSAEDQDEKICIHHPSSRINEYCRSDNQLLCAFCKIAFHNGHDTVSLIDACSERSAALFSAIAKFKAVRYEIDNDLMEFNILKSSFKADKEAKRKEVRNGFLKLRAILQEKEKIIMEQIENLEVSRQKEIEKYVYITTMKVNEMDGLIAYSKEALKETGQVAFLQSAKILVDQIEEGIQNTFRPDPQLRLHSLHCIPLDFAELSNAIHELFPTGPKKACSSGDSLPSQYPIHSEMMIARKVTFSTHSFGNQQIYQRSSSLISFNTANDKGKMGLENYGRAQSAAPAKTTDGLYTYWSATGETQPPQSSNSFHNWYSFNDTSVRTPGPIVIYQTLVYPRAAKVYWTCPTEDVDSFEMEFYELVTTPPNNVRTELCGQIRDILQQNLELHNLTPNTEYLFKVRAINDNGPGQWSDICKVVTPDGRGKNRAKWGLLKNIQSALQKRF.

An RING-type zinc finger spans residues 146-192 (CPMCNRLRLHSFMLPCNHSLCEKCLRQLQKHAEVTENFFILICPMCS). 2 consecutive B box-type zinc fingers follow at residues 235 to 280 (PILC…FVDT) and 285 to 326 (QDEK…TVSL). The Zn(2+) site is built by Cys290, His293, Cys313, and His318. Positions 382–412 (KLRAILQEKEKIIMEQIENLEVSRQKEIEKY) form a coiled coil. In terms of domain architecture, COS spans 434-492 (LKETGQVAFLQSAKILVDQIEEGIQNTFRPDPQLRLHSLHCIPLDFAELSNAIHELFPT). A Fibronectin type-III domain is found at 603-701 (TPGPIVIYQT…DICKVVTPDG (99 aa)).

The protein belongs to the TRIM/RBCC family.

The protein is Tripartite motif-containing protein 42 (Trim42) of Mus musculus (Mouse).